The following is a 207-amino-acid chain: uncharacterized protein (207 aa).

The signal sequence occupies residues 1-19 (MRHGLLALICWLCCVVAHS).

It to P.aeruginosa PA4490 and T.maritima TM0986.

This is an uncharacterized protein from Escherichia coli (strain K12).